The primary structure comprises 859 residues: DNA mismatch repair protein MutS (859 aa).

618-625 (GPNMGGKS) contacts ATP.

It belongs to the DNA mismatch repair MutS family.

In terms of biological role, this protein is involved in the repair of mismatches in DNA. It is possible that it carries out the mismatch recognition step. This protein has a weak ATPase activity. This Shewanella halifaxensis (strain HAW-EB4) protein is DNA mismatch repair protein MutS.